The following is a 331-amino-acid chain: PTS-dependent dihydroxyacetone kinase 2, dihydroxyacetone-binding subunit DhaK (331 aa).

The DhaK domain maps to 7-328; that stretch reads DGYEAVEEML…LDTPCDTPYF (322 aa). Dihydroxyacetone contacts are provided by residues 55–58 and aspartate 111; that span reads GSGH. Histidine 58 (proton acceptor) is an active-site residue. Residue histidine 218 is the Tele-hemiaminal-histidine intermediate of the active site.

In terms of assembly, homodimer. The dihydroxyacetone kinase complex is composed of a homodimer of DhaM, a homodimer of DhaK and the subunit DhaL.

It localises to the cytoplasm. The enzyme catalyses dihydroxyacetone + phosphoenolpyruvate = dihydroxyacetone phosphate + pyruvate. It functions in the pathway polyol metabolism; glycerol degradation. In terms of biological role, dihydroxyacetone binding subunit of the dihydroxyacetone kinase, which is responsible for the phosphoenolpyruvate (PEP)-dependent phosphorylation of dihydroxyacetone via a phosphoryl group transfer from DhaL-ATP. This is PTS-dependent dihydroxyacetone kinase 2, dihydroxyacetone-binding subunit DhaK from Listeria innocua serovar 6a (strain ATCC BAA-680 / CLIP 11262).